Reading from the N-terminus, the 1125-residue chain is Probable inorganic carbon transporter subunit DabA (1125 aa).

Residues Cys-578, Asp-580, His-769, and Cys-784 each coordinate Zn(2+). The segment at Ser-1106–Ala-1125 is disordered.

The protein belongs to the inorganic carbon transporter (TC 9.A.2) DabA family. As to quaternary structure, forms a complex with DabB. The cofactor is Zn(2+).

The protein localises to the cell inner membrane. In terms of biological role, part of an energy-coupled inorganic carbon pump. This chain is Probable inorganic carbon transporter subunit DabA, found in Nitrosococcus oceani (strain ATCC 19707 / BCRC 17464 / JCM 30415 / NCIMB 11848 / C-107).